The sequence spans 469 residues: Tryptophan biosynthesis protein TrpCF (469 aa).

The interval 1 to 257 is indole-3-glycerol phosphate synthase; it reads MNSILKEIIN…EAVCKMILGN (257 aa). The N-(5'-phosphoribosyl)anthranilate isomerase stretch occupies residues 258–469; that stretch reads NKICGLTQSS…YRNLICLGKK (212 aa).

The protein in the N-terminal section; belongs to the TrpC family. This sequence in the C-terminal section; belongs to the TrpF family. As to quaternary structure, monomer.

The catalysed reaction is N-(5-phospho-beta-D-ribosyl)anthranilate = 1-(2-carboxyphenylamino)-1-deoxy-D-ribulose 5-phosphate. It catalyses the reaction 1-(2-carboxyphenylamino)-1-deoxy-D-ribulose 5-phosphate + H(+) = (1S,2R)-1-C-(indol-3-yl)glycerol 3-phosphate + CO2 + H2O. Its pathway is amino-acid biosynthesis; L-tryptophan biosynthesis; L-tryptophan from chorismate: step 3/5. It functions in the pathway amino-acid biosynthesis; L-tryptophan biosynthesis; L-tryptophan from chorismate: step 4/5. Functionally, bifunctional enzyme that catalyzes two sequential steps of tryptophan biosynthetic pathway. The first reaction is catalyzed by the isomerase, coded by the TrpF domain; the second reaction is catalyzed by the synthase, coded by the TrpC domain. The chain is Tryptophan biosynthesis protein TrpCF (trpC) from Buchnera aphidicola subsp. Baizongia pistaciae (strain Bp).